A 400-amino-acid polypeptide reads, in one-letter code: Argininosuccinate synthase (400 aa).

8–16 (AYSGGLDTS) contacts ATP. Residues Y86 and S91 each contribute to the L-citrulline site. G116 is an ATP binding site. Positions 118, 122, and 123 each coordinate L-aspartate. An L-citrulline-binding site is contributed by N122. Positions 126, 175, 184, 260, and 272 each coordinate L-citrulline.

Belongs to the argininosuccinate synthase family. Type 1 subfamily. In terms of assembly, homotetramer.

It localises to the cytoplasm. It carries out the reaction L-citrulline + L-aspartate + ATP = 2-(N(omega)-L-arginino)succinate + AMP + diphosphate + H(+). Its pathway is amino-acid biosynthesis; L-arginine biosynthesis; L-arginine from L-ornithine and carbamoyl phosphate: step 2/3. The chain is Argininosuccinate synthase from Clostridium acetobutylicum (strain ATCC 824 / DSM 792 / JCM 1419 / IAM 19013 / LMG 5710 / NBRC 13948 / NRRL B-527 / VKM B-1787 / 2291 / W).